The following is a 279-amino-acid chain: Shikimate dehydrogenase (NADP(+)) (279 aa).

Shikimate-binding positions include 21–23 (SMS) and Thr68. Residue Lys72 is the Proton acceptor of the active site. The shikimate site is built by Asn93 and Asp108. NADP(+)-binding positions include 130–134 (GAGGA) and Leu219. Tyr221 is a shikimate binding site. Position 242 (Gly242) interacts with NADP(+).

It belongs to the shikimate dehydrogenase family. As to quaternary structure, homodimer.

The enzyme catalyses shikimate + NADP(+) = 3-dehydroshikimate + NADPH + H(+). Its pathway is metabolic intermediate biosynthesis; chorismate biosynthesis; chorismate from D-erythrose 4-phosphate and phosphoenolpyruvate: step 4/7. Involved in the biosynthesis of the chorismate, which leads to the biosynthesis of aromatic amino acids. Catalyzes the reversible NADPH linked reduction of 3-dehydroshikimate (DHSA) to yield shikimate (SA). The protein is Shikimate dehydrogenase (NADP(+)) of Oleidesulfovibrio alaskensis (strain ATCC BAA-1058 / DSM 17464 / G20) (Desulfovibrio alaskensis).